A 193-amino-acid chain; its full sequence is Peptidyl-tRNA hydrolase (193 aa).

TRNA is bound at residue Y16. The active-site Proton acceptor is H21. 3 residues coordinate tRNA: F66, N68, and N114.

Belongs to the PTH family. As to quaternary structure, monomer.

It is found in the cytoplasm. It catalyses the reaction an N-acyl-L-alpha-aminoacyl-tRNA + H2O = an N-acyl-L-amino acid + a tRNA + H(+). Its function is as follows. Hydrolyzes ribosome-free peptidyl-tRNAs (with 1 or more amino acids incorporated), which drop off the ribosome during protein synthesis, or as a result of ribosome stalling. Catalyzes the release of premature peptidyl moieties from peptidyl-tRNA molecules trapped in stalled 50S ribosomal subunits, and thus maintains levels of free tRNAs and 50S ribosomes. The protein is Peptidyl-tRNA hydrolase of Trichlorobacter lovleyi (strain ATCC BAA-1151 / DSM 17278 / SZ) (Geobacter lovleyi).